Consider the following 118-residue polypeptide: Small ribosomal subunit protein mS41 (118 aa).

A mitochondrion-targeting transit peptide spans 1-24 (MLRVVAKAQYPAAVRCFSTSHAAF).

It belongs to the mitochondrion-specific ribosomal protein mS41 family.

It is found in the mitochondrion. In terms of biological role, involved in telomere length regulation. This is Small ribosomal subunit protein mS41 (FYV4) from Yarrowia lipolytica (strain CLIB 122 / E 150) (Yeast).